Reading from the N-terminus, the 218-residue chain is Ependymin (218 aa).

An N-terminal signal peptide occupies residues 1 to 20 (MHTVKLLCVVFSCLCAVAWG). N-linked (GlcNAc...) asparagine glycosylation is found at Asn-74 and Asn-97.

Belongs to the ependymin family. As to quaternary structure, forms disulfide-linked dimers. In terms of processing, binds calcium through the terminal sialic acids.

The protein resides in the secreted. Functionally, may play a role in neural plasticity. May be involved during axon regeneration. The protein is Ependymin (epd) of Devario aequipinnatus (Giant danio).